The following is a 358-amino-acid chain: Dihydroorotate dehydrogenase (quinone) (358 aa).

Residues 61–65 (AGFDK) and Gly85 each bind FMN. Residue Lys65 participates in substrate binding. 110 to 114 (NRFGL) serves as a coordination point for substrate. The FMN site is built by Asn139 and Asn170. Residue Asn170 participates in substrate binding. Ser173 acts as the Nucleophile in catalysis. Asn175 is a substrate binding site. FMN-binding residues include Lys211 and Ser239. Substrate is bound at residue 240-241 (NT). Residues Gly263, Gly292, and 313-314 (YS) each bind FMN.

It belongs to the dihydroorotate dehydrogenase family. Type 2 subfamily. Monomer. FMN serves as cofactor.

The protein resides in the cell membrane. It catalyses the reaction (S)-dihydroorotate + a quinone = orotate + a quinol. It functions in the pathway pyrimidine metabolism; UMP biosynthesis via de novo pathway; orotate from (S)-dihydroorotate (quinone route): step 1/1. Functionally, catalyzes the conversion of dihydroorotate to orotate with quinone as electron acceptor. The polypeptide is Dihydroorotate dehydrogenase (quinone) (Methylorubrum extorquens (strain CM4 / NCIMB 13688) (Methylobacterium extorquens)).